We begin with the raw amino-acid sequence, 28 residues long: MRKPSAFHACNIIFLPLVKCASATIMLN.

The chain crosses the membrane as a helical span at residues 5–27; that stretch reads SAFHACNIIFLPLVKCASATIML.

Its subcellular location is the membrane. This is an uncharacterized protein from Saccharomyces cerevisiae (strain ATCC 204508 / S288c) (Baker's yeast).